The primary structure comprises 296 residues: 4-hydroxy-tetrahydrodipicolinate synthase (296 aa).

Residue Thr49 coordinates pyruvate. The active-site Proton donor/acceptor is Tyr137. The Schiff-base intermediate with substrate role is filled by Lys165. Residue Ile207 participates in pyruvate binding.

The protein belongs to the DapA family. Homotetramer; dimer of dimers.

The protein resides in the cytoplasm. The catalysed reaction is L-aspartate 4-semialdehyde + pyruvate = (2S,4S)-4-hydroxy-2,3,4,5-tetrahydrodipicolinate + H2O + H(+). The protein operates within amino-acid biosynthesis; L-lysine biosynthesis via DAP pathway; (S)-tetrahydrodipicolinate from L-aspartate: step 3/4. Its function is as follows. Catalyzes the condensation of (S)-aspartate-beta-semialdehyde [(S)-ASA] and pyruvate to 4-hydroxy-tetrahydrodipicolinate (HTPA). The protein is 4-hydroxy-tetrahydrodipicolinate synthase of Rhodopseudomonas palustris (strain BisA53).